Here is a 296-residue protein sequence, read N- to C-terminus: 4-diphosphocytidyl-2-C-methyl-D-erythritol kinase (296 aa).

K18 is a catalytic residue. 102-112 (PMGGGIGGGSS) contacts ATP. D144 is a catalytic residue.

It belongs to the GHMP kinase family. IspE subfamily.

The catalysed reaction is 4-CDP-2-C-methyl-D-erythritol + ATP = 4-CDP-2-C-methyl-D-erythritol 2-phosphate + ADP + H(+). The protein operates within isoprenoid biosynthesis; isopentenyl diphosphate biosynthesis via DXP pathway; isopentenyl diphosphate from 1-deoxy-D-xylulose 5-phosphate: step 3/6. Catalyzes the phosphorylation of the position 2 hydroxy group of 4-diphosphocytidyl-2C-methyl-D-erythritol. The polypeptide is 4-diphosphocytidyl-2-C-methyl-D-erythritol kinase (Vibrio atlanticus (strain LGP32) (Vibrio splendidus (strain Mel32))).